Reading from the N-terminus, the 299-residue chain is Probable lipid kinase YegS (299 aa).

In terms of domain architecture, DAGKc spans 2-133; sequence ANFPASLLIL…IDMARVNDKT (132 aa). ATP-binding positions include threonine 40, 66-72, and threonine 95; that span reads GDGTINE. Mg(2+) contacts are provided by leucine 215, aspartate 218, and leucine 220. The Proton acceptor role is filled by glutamate 271.

The protein belongs to the diacylglycerol/lipid kinase family. YegS lipid kinase subfamily. Requires Mg(2+) as cofactor. It depends on Ca(2+) as a cofactor.

Its subcellular location is the cytoplasm. Its function is as follows. Probably phosphorylates lipids; the in vivo substrate is unknown. The chain is Probable lipid kinase YegS from Salmonella paratyphi A (strain ATCC 9150 / SARB42).